The following is a 155-amino-acid chain: Small ribosomal subunit protein uS7c (155 aa).

The protein belongs to the universal ribosomal protein uS7 family. Part of the 30S ribosomal subunit.

Its subcellular location is the plastid. The protein localises to the chloroplast. Functionally, one of the primary rRNA binding proteins, it binds directly to 16S rRNA where it nucleates assembly of the head domain of the 30S subunit. The protein is Small ribosomal subunit protein uS7c (rps7) of Chaetosphaeridium globosum (Charophycean green alga).